The following is a 365-amino-acid chain: Ribosome biogenesis regulatory protein homolog (365 aa).

Met1 bears the N-acetylmethionine mark. A Phosphoserine modification is found at Ser5. Residues Lys154 and Lys226 each participate in a glycyl lysine isopeptide (Lys-Gly) (interchain with G-Cter in SUMO2) cross-link. Residues 200-255 (QMPSSAGLHPTGHQSKEELGRAMQVAKVSTASVGRFQERLPKEKAPRGSGKKRKFQ) are disordered. Residues 235–245 (FQERLPKEKAP) are compositionally biased toward basic and acidic residues. Lys266 is covalently cross-linked (Glycyl lysine isopeptide (Lys-Gly) (interchain with G-Cter in SUMO2)). The segment at 272–365 (LRVMNSKKPQ…VPHHGGKRRK (94 aa)) is disordered. At Arg273 the chain carries Citrulline. Basic residues-rich tracts occupy residues 302 to 325 (KRRK…RRKG) and 340 to 365 (GKKH…KRRK).

This sequence belongs to the RRS1 family. In terms of assembly, component of a hexameric 5S RNP precursor complex, composed of 5S RNA, RRS1, RPF2/BXDC1, RPL5, RPL11 and HEATR3; this complex acts as a precursor for ribosome assembly. Citrullinated by PADI4.

Its subcellular location is the nucleus. The protein resides in the nucleolus. In terms of biological role, involved in ribosomal large subunit assembly. May regulate the localization of the 5S RNP/5S ribonucleoprotein particle to the nucleolus. The chain is Ribosome biogenesis regulatory protein homolog (Rrs1) from Rattus norvegicus (Rat).